A 123-amino-acid chain; its full sequence is Double-stranded DNA deaminase immunity protein (123 aa).

In terms of assembly, the toxic domain forms a 1:1 complex with the DddI immunity protein. This protein blocks the active site of the toxin.

Its function is as follows. Immunity protein component of a toxin-immunity protein module, which functions as a cellular contact-dependent growth inhibition (CDI) system. CDI modules allow bacteria to communicate with and inhibit the growth of closely related neighboring bacteria in a contact-dependent fashion. Bacteria that have this module inhibit or kill bacteria without it, giving them a growth advantage. Specifically inhibits the toxic activity of cognate toxin DddA (C-terminal 163 residue fragment) upon expression in E.coli. The protein is Double-stranded DNA deaminase immunity protein of Burkholderia cenocepacia (strain H111).